Consider the following 224-residue polypeptide: Redox-sensing transcriptional repressor Rex (224 aa).

A DNA-binding region (H-T-H motif) is located at residues 17–56; sequence RYHRCLEELLKNDIKRISSKELSERMGVTASQIRQDLNNF. 91–96 contributes to the NAD(+) binding site; sequence GAGNLG.

It belongs to the transcriptional regulatory Rex family. In terms of assembly, homodimer.

Its subcellular location is the cytoplasm. Its function is as follows. Modulates transcription in response to changes in cellular NADH/NAD(+) redox state. The polypeptide is Redox-sensing transcriptional repressor Rex (Caldanaerobacter subterraneus subsp. tengcongensis (strain DSM 15242 / JCM 11007 / NBRC 100824 / MB4) (Thermoanaerobacter tengcongensis)).